Here is a 212-residue protein sequence, read N- to C-terminus: Minor capsid protein VP2 (212 aa).

The protein belongs to the norovirus VP2 family. In terms of assembly, homooligomer. The portal-like structure consists in 12 copies of VP2. Interacts with capsid protein VP1.

The protein localises to the virion. It localises to the host cytoplasm. Functionally, minor structural protein that forms a portal-like structure at a unique three-fold axis of symmetry, following binding to the host receptor. The channel formed by VP2 may allow the delivery of the viral genome through the host endosomal membrane. This chain is Minor capsid protein VP2, found in Norovirus (strain Human/NoV/United States/Norwalk/1968/GI) (Hu/NV/NV/1968/US).